An 83-amino-acid chain; its full sequence is Small ribosomal subunit protein bS20 (83 aa).

This sequence belongs to the bacterial ribosomal protein bS20 family.

In terms of biological role, binds directly to 16S ribosomal RNA. The protein is Small ribosomal subunit protein bS20 of Amoebophilus asiaticus (strain 5a2).